Reading from the N-terminus, the 292-residue chain is Formamidopyrimidine-DNA glycosylase (292 aa).

Pro-2 (schiff-base intermediate with DNA) is an active-site residue. Glu-3 serves as the catalytic Proton donor. The active-site Proton donor; for beta-elimination activity is Lys-60. DNA is bound by residues His-109, Arg-128, and Lys-173. An FPG-type zinc finger spans residues 258–292 (NVYRRTGKKCRQCKNLIERQKISGRSTHWCRKCQK). Catalysis depends on Arg-282, which acts as the Proton donor; for delta-elimination activity.

It belongs to the FPG family. Monomer. Zn(2+) serves as cofactor.

It carries out the reaction Hydrolysis of DNA containing ring-opened 7-methylguanine residues, releasing 2,6-diamino-4-hydroxy-5-(N-methyl)formamidopyrimidine.. The enzyme catalyses 2'-deoxyribonucleotide-(2'-deoxyribose 5'-phosphate)-2'-deoxyribonucleotide-DNA = a 3'-end 2'-deoxyribonucleotide-(2,3-dehydro-2,3-deoxyribose 5'-phosphate)-DNA + a 5'-end 5'-phospho-2'-deoxyribonucleoside-DNA + H(+). Involved in base excision repair of DNA damaged by oxidation or by mutagenic agents. Acts as a DNA glycosylase that recognizes and removes damaged bases. Has a preference for oxidized purines, such as 7,8-dihydro-8-oxoguanine (8-oxoG). Has AP (apurinic/apyrimidinic) lyase activity and introduces nicks in the DNA strand. Cleaves the DNA backbone by beta-delta elimination to generate a single-strand break at the site of the removed base with both 3'- and 5'-phosphates. This Prochlorococcus marinus subsp. pastoris (strain CCMP1986 / NIES-2087 / MED4) protein is Formamidopyrimidine-DNA glycosylase.